Reading from the N-terminus, the 308-residue chain is Putative lipid kinase SH2167 (308 aa).

Residues 1–139 (MGQKFNHGVL…YDVMKVNGTY (139 aa)) enclose the DAGKc domain. ATP contacts are provided by residues Ser-44, 74-80 (GDGTVNE), and Thr-101. Residues Ser-220, Asp-223, and Lys-225 each contribute to the Mg(2+) site. Glu-281 (proton acceptor) is an active-site residue.

The protein belongs to the diacylglycerol/lipid kinase family. Mg(2+) is required as a cofactor.

May catalyze the ATP-dependent phosphorylation of lipids other than diacylglycerol (DAG). This is Putative lipid kinase SH2167 from Staphylococcus haemolyticus (strain JCSC1435).